The sequence spans 227 residues: Cytochrome c oxidase subunit 2 (227 aa).

At 1–14 the chain is on the mitochondrial intermembrane side; sequence MAYPFQLGLQDATS. Residues 15 to 45 form a helical membrane-spanning segment; sequence PIMEELTNFHDHTLMIVFLISSLVLYIISLM. The Mitochondrial matrix portion of the chain corresponds to 46–59; that stretch reads LTTKLTHTSTMDAQ. The helical transmembrane segment at 60 to 87 threads the bilayer; it reads EVETIWTILPAVILILIALPSLRILYMM. Residues 88 to 227 lie on the Mitochondrial intermembrane side of the membrane; sequence DEINNPVLTV…YFENWSASMI (140 aa). 6 residues coordinate Cu cation: H161, C196, E198, C200, H204, and M207. E198 lines the Mg(2+) pocket. Y218 carries the post-translational modification Phosphotyrosine.

The protein belongs to the cytochrome c oxidase subunit 2 family. As to quaternary structure, component of the cytochrome c oxidase (complex IV, CIV), a multisubunit enzyme composed of 14 subunits. The complex is composed of a catalytic core of 3 subunits MT-CO1, MT-CO2 and MT-CO3, encoded in the mitochondrial DNA, and 11 supernumerary subunits COX4I, COX5A, COX5B, COX6A, COX6B, COX6C, COX7A, COX7B, COX7C, COX8 and NDUFA4, which are encoded in the nuclear genome. The complex exists as a monomer or a dimer and forms supercomplexes (SCs) in the inner mitochondrial membrane with NADH-ubiquinone oxidoreductase (complex I, CI) and ubiquinol-cytochrome c oxidoreductase (cytochrome b-c1 complex, complex III, CIII), resulting in different assemblies (supercomplex SCI(1)III(2)IV(1) and megacomplex MCI(2)III(2)IV(2)). Found in a complex with TMEM177, COA6, COX18, COX20, SCO1 and SCO2. Interacts with TMEM177 in a COX20-dependent manner. Interacts with COX20. Interacts with COX16. Requires Cu cation as cofactor.

It localises to the mitochondrion inner membrane. The catalysed reaction is 4 Fe(II)-[cytochrome c] + O2 + 8 H(+)(in) = 4 Fe(III)-[cytochrome c] + 2 H2O + 4 H(+)(out). Functionally, component of the cytochrome c oxidase, the last enzyme in the mitochondrial electron transport chain which drives oxidative phosphorylation. The respiratory chain contains 3 multisubunit complexes succinate dehydrogenase (complex II, CII), ubiquinol-cytochrome c oxidoreductase (cytochrome b-c1 complex, complex III, CIII) and cytochrome c oxidase (complex IV, CIV), that cooperate to transfer electrons derived from NADH and succinate to molecular oxygen, creating an electrochemical gradient over the inner membrane that drives transmembrane transport and the ATP synthase. Cytochrome c oxidase is the component of the respiratory chain that catalyzes the reduction of oxygen to water. Electrons originating from reduced cytochrome c in the intermembrane space (IMS) are transferred via the dinuclear copper A center (CU(A)) of subunit 2 and heme A of subunit 1 to the active site in subunit 1, a binuclear center (BNC) formed by heme A3 and copper B (CU(B)). The BNC reduces molecular oxygen to 2 water molecules using 4 electrons from cytochrome c in the IMS and 4 protons from the mitochondrial matrix. This is Cytochrome c oxidase subunit 2 (MT-CO2) from Dacnomys millardi (Millard's rat).